The primary structure comprises 312 residues: MELHFLGTGAGVPAKKRNVSALAIRFLERNGTVWLFDCGEATQHQFLHSPLSLAAVEAIFITHLHGDHILGLPGLLSSRSFQGAETPLDIYGPKGLEAFVIQALETTKTKLRFPIRFHVLAEGRIRDEEKLSVDALALDHPVESYAFRIKEQDKPGTLDAEALKAMGVPPGPLYAQLKKGETVKLADGRIVNGSAFLDESIRGRTVVIAGDTAPVKAMEAFASGADVLVHEATFASNKKDDAHLYGHSTIADACALAKRAAVGQLILTHVSSRYARNENEYRDEAAALLPNVIIAEDLFVFELEKAGRKKRD.

Residues His-63, His-65, Asp-67, His-68, His-140, Asp-211, and His-269 each coordinate Zn(2+). The active-site Proton acceptor is the Asp-67.

Belongs to the RNase Z family. Homodimer. Zn(2+) serves as cofactor.

The enzyme catalyses Endonucleolytic cleavage of RNA, removing extra 3' nucleotides from tRNA precursor, generating 3' termini of tRNAs. A 3'-hydroxy group is left at the tRNA terminus and a 5'-phosphoryl group is left at the trailer molecule.. In terms of biological role, zinc phosphodiesterase, which displays some tRNA 3'-processing endonuclease activity. Probably involved in tRNA maturation, by removing a 3'-trailer from precursor tRNA. The sequence is that of Ribonuclease Z from Shouchella clausii (strain KSM-K16) (Alkalihalobacillus clausii).